The chain runs to 369 residues: UPF0284 protein AM1_5137 (369 aa).

This sequence belongs to the UPF0284 family.

The polypeptide is UPF0284 protein AM1_5137 (Acaryochloris marina (strain MBIC 11017)).